The chain runs to 1829 residues: Protein let-418 (1829 aa).

Composition is skewed to acidic residues over residues 1-17 and 25-39; these read MSTE…ESME and ATEE…EQGD. Disordered regions lie at residues 1–81 and 147–198; these read MSTE…YNST and MAAQ…SDQE. Residues 48 to 63 are compositionally biased toward basic residues; sequence RSSRKKGGKGGKKGSK. 2 consecutive PHD-type zinc fingers follow at residues 256–303 and 317–365; these read NDYC…CIEH and DEFC…CETV. Chromo domains lie at 401–458 and 489–550; these read LKPP…PPEF and MQIH…NEDI. One can recognise a Helicase ATP-binding domain in the interval 614 to 798; it reads RHCWSNGTDA…FHLLNFLSKE (185 aa). An ATP-binding site is contributed by 627-634; that stretch reads DEMGLGKT. The short motif at 749–752 is the DEAH box element; that stretch reads DEAH. Residues 930–1093 form the Helicase C-terminal domain; the sequence is LLQKMLRKLK…GKTMSKTELD (164 aa). 4 disordered regions span residues 1168-1198, 1234-1289, 1415-1495, and 1745-1829; these read ASYQ…EPDP, SENM…MPPL, AANG…ARPS, and NGER…PMET. The span at 1177–1186 shows a compositional bias: acidic residues; sequence GQEEEEEEET. Polar residues-rich tracts occupy residues 1234-1247 and 1418-1427; these read SENM…QNQT and GSAQGSSRST. A compositionally biased stretch (basic and acidic residues) spans 1429–1444; sequence KPKEEPKEEPMEKEDA. The segment covering 1446–1455 has biased composition (polar residues); the sequence is ETVNGATSEP. The span at 1474–1490 shows a compositional bias: basic and acidic residues; the sequence is DEAKEPKEEPIETEKPR. A compositionally biased stretch (acidic residues) spans 1749–1773; it reads MEEDEPVEAEEEEGVKQEPDDETQD. A compositionally biased stretch (low complexity) spans 1792–1811; that stretch reads DVPSTSAAAAVSSETAADAE. Acidic residues predominate over residues 1819 to 1829; sequence APTDEPEPMET.

As to quaternary structure, component of the MEC (MEP-1-containing complex) complex that contains let-418, mep-1 and hda-1. Component of a NURD complex that contains let-418, hda-1, lin-40 and lin-53. Interacts with lin-1. Interacts with pie-1. Interacts with akir-1. As to expression, expressed in embryos and larva.

Its subcellular location is the nucleus. Its function is as follows. Part of a NuRD (Nucleosome Remodeling and Deacetylase) complex which is implicated in the synMuv B pathway that negatively regulates specification of vulval cell fate. This negative regulation is thought to be mediated via interaction with the promoter of lin-39, a key regulator in vulva development, and is dependent on the presence lin-1. Contributes to negative regulation of lag-2 which is expressed in the gut during larval development. Has a broad role in development. In association with akir-1, plays a role in regulating the transcription of antimicrobial peptide genes in response to fungal infection. In Caenorhabditis elegans, this protein is Protein let-418.